The chain runs to 484 residues: Zinc metalloproteinase-disintegrin BlatH1 (484 aa).

An N-terminal signal peptide occupies residues 1–20 (MIQVLLVTICLAALPYQGSS). Residues 21–190 (IILESGNVND…KKASQSNLTP (170 aa)) constitute a propeptide that is removed on maturation. E191 is subject to Pyrrolidone carboxylic acid (Glu). The Peptidase M12B domain maps to 199–395 (KYVELVIVAD…QNSQCILNEP (197 aa)). E202 provides a ligand contact to Ca(2+). N-linked (GlcNAc...) asparagine glycosylation is present at N259. D286 lines the Ca(2+) pocket. N297 carries an N-linked (GlcNAc...) asparagine glycan. Cystine bridges form between C310-C390, C350-C374, and C352-C357. H335 serves as a coordination point for Zn(2+). E336 is an active-site residue. Zn(2+) is bound by residues H339 and H345. The N-linked (GlcNAc...) asparagine glycan is linked to N373. 7 residues coordinate Ca(2+): C390, N393, V405, N408, E412, E415, and D418. The Disintegrin domain maps to 403-484 (PPVCGNEILE…GQSADCPSNG (82 aa)). Cystine bridges form between C406–C425, C417–C435, C419–C430, C429–C452, C443–C449, C448–C473, and C461–C480. The TDN-tripeptide motif lies at 465–467 (TDN).

It belongs to the venom metalloproteinase (M12B) family. P-II subfamily. P-IIc sub-subfamily. As to quaternary structure, homodimer. Zn(2+) serves as cofactor. Post-translationally, the N-terminus is blocked. In terms of tissue distribution, expressed by the venom gland.

It is found in the secreted. Platelet aggregation in inhibited by the metalloproteinase inhibitors EDTA and Batimastat. The hemorrhagic activity is not inhibited by the plasma proteinase inhibitor alpha2-macroglobulin, although the SVMP is able to cleave this plasma inhibitor, generating a 90 kDa product. In terms of biological role, snake venom zinc metalloprotease-disintegrin that hydrolyzes azocasein, gelatin and fibrinogen (Aalpha and Bbeta chains and partially gamma-chain), and exerts a potent local and systemic hemorrhagic activity in mice. It inhibits ADP- and collagen-induced human platelet aggregation (IC(50) = 0.3 uM and 0.7 uM for ADP and collagen, respectively). This inhibition is dependent of protease activity, and probably occurs through the degradation of an unknown platelet receptor. In Bothriechis lateralis (Side-striped palm pitviper), this protein is Zinc metalloproteinase-disintegrin BlatH1.